A 172-amino-acid polypeptide reads, in one-letter code: MKRIITLTVVNRSGVLNRITGLFTKRHYNIESITVGHTETAGVSRITFVVHVEGENDVEQLTKQLNKQIDVLKVTDITNQSIVQRELALIKVVSAPSTRTEINGIIEPFRASVVDVSRDSIVVQVTGESNKIEALIELLKPYGIKEIARTGTTAFARGTQQKASSNKTISIV.

Positions I4 to N79 constitute an ACT domain.

The protein belongs to the acetolactate synthase small subunit family. In terms of assembly, dimer of large and small chains.

The enzyme catalyses 2 pyruvate + H(+) = (2S)-2-acetolactate + CO2. It functions in the pathway amino-acid biosynthesis; L-isoleucine biosynthesis; L-isoleucine from 2-oxobutanoate: step 1/4. The protein operates within amino-acid biosynthesis; L-valine biosynthesis; L-valine from pyruvate: step 1/4. In Bacillus subtilis (strain 168), this protein is Acetolactate synthase small subunit (ilvH).